Reading from the N-terminus, the 261-residue chain is UPF0177 protein YvdC (261 aa).

6 helical membrane passes run 15 to 35 (WVIVIILALLFSALSVSIFHL), 43 to 63 (VLSIVGLIFAYHKSVWLVLFI), 84 to 104 (LDTVIFFIIFLLTIISSYLIA), 123 to 143 (IIIGFALLFLVSILTGIFAQI), 197 to 217 (YFAFLTALLLFAYMHGPTDLY), and 239 to 259 (FYLNMSVHLLWNLFGLVIALV).

It belongs to the UPF0177 family.

The protein resides in the cell membrane. This is UPF0177 protein YvdC (yvdC) from Lactococcus lactis subsp. lactis (strain IL1403) (Streptococcus lactis).